A 1903-amino-acid chain; its full sequence is CDK5 regulatory subunit-associated protein 2 (1903 aa).

The CM1 motif; interacts with the gTuRC stretch occupies residues 51–94; that stretch reads KVSPTRARNMKDFENQITELKKENFNLKLRIYFLEERIQQEFAG. The disordered stretch occupies residues 244-282; the sequence is KSQMASPDENVSSGELRGLSATLREEKERDAEERQKERN. The segment covering 246–256 has biased composition (polar residues); sequence QMASPDENVSS. The segment covering 266 to 282 has biased composition (basic and acidic residues); the sequence is LREEKERDAEERQKERN. 2 positions are modified to phosphoserine: Ser485 and Ser544. Positions 1022 to 1044 are disordered; it reads GKPGEQEGHETTHSAGRDKEVDS. Residues 1025–1043 show a composition bias toward basic and acidic residues; sequence GEQEGHETTHSAGRDKEVD. Position 1193 is a phosphothreonine (Thr1193). A phosphoserine mark is found at Ser1241 and Ser1243. The disordered stretch occupies residues 1349 to 1387; the sequence is QHLLPESPEPSASHALSDDEMSEKSFLSREPKPDSETEK. A compositionally biased stretch (basic and acidic residues) spans 1370 to 1387; the sequence is SEKSFLSREPKPDSETEK. A phosphoserine mark is found at Ser1495, Ser1673, and Ser1676. The interaction with CDK5R1 stretch occupies residues 1736 to 1778; sequence HMLCLIEDYDALYKQISWGQTLLAKMDIQTQEALSPTSQKLGP. Required for centrosomal attachment, Golgi localization and CALM1 interaction regions lie at residues 1736 to 1903 and 1871 to 1880; these read HMLC…RPGS and VITHQVLRKA. The segment at 1883–1903 is disordered; sequence NLELRPRAAHPGTSSPSRPGS. Over residues 1894–1903 the composition is skewed to polar residues; sequence GTSSPSRPGS. The residue at position 1903 (Ser1903) is a Phosphoserine.

In terms of assembly, homodimer. Interacts with CDK5R1 (p35 form). CDK5RAP1, CDK5RAP2 and CDK5RAP3 show competitive binding to CDK5R1. May form a complex with CDK5R1 and CDK5. Interacts with pericentrin/PCNT; the interaction is leading to centrosomal and Golgi localization of CDK5RAP2 and PCNT. Interacts with AKAP9; the interaction targets CDK5RAP2 and AKAP9 to Golgi apparatus. Interacts with TUBG1; the interaction is leading to the centrosomal localization of CDK5RAP2 and TUBG1. Interacts with TUBGCP3. Interacts with CALM1. Interacts with CDC20. Interacts with CEP68; degradation of CEP68 in early mitosis leads to removal of CDK5RAP2 from the centrosome which promotes centriole disengagement and subsequent centriole separation. Interacts with NCKAP5L. Interacts with LGALS3BP; this interaction may connect the pericentrosomal complex to the gamma-tubulin ring complex (gTuRC) to promote microtubule assembly and acetylation. Contrary to human, chimpanzee, bovine and dog orthologous proteins, does not interact with EB1/MAPRE1, possibly due to a divergence at the level of the critical residue 939, which is a proline in MAPRE1-binding orthologs and a leucine in mouse and rat. Interacts with CCDC66. Associates (via CM1 motif) with TUBGCP2 of the gTuRC; the interaction plays a role in gTuRC activation. In terms of processing, phosphorylated in vitro by CDK5.

The protein resides in the cytoplasm. The protein localises to the cytoskeleton. It localises to the microtubule organizing center. It is found in the centrosome. Its subcellular location is the golgi apparatus. In terms of biological role, potential regulator of CDK5 activity via its interaction with CDK5R1. Negative regulator of centriole disengagement (licensing) which maintains centriole engagement and cohesion. Involved in regulation of mitotic spindle orientation. Plays a role in the spindle checkpoint activation by acting as a transcriptional regulator of both BUBR1 and MAD2 promoter. Together with EB1/MAPRE1, may promote microtubule polymerization, bundle formation, growth and dynamics at the plus ends. Regulates centrosomal maturation by recruitment of the gamma-tubulin ring complex (gTuRC) onto centrosomes. In complex with PDE4DIP isoform 13/MMG8/SMYLE, MAPRE1 and AKAP9, contributes to microtubules nucleation and extension from the centrosome to the cell periphery. Required for the recruitment of AKAP9 to centrosomes. Plays a role in neurogenesis. The polypeptide is CDK5 regulatory subunit-associated protein 2 (Cdk5rap2) (Rattus norvegicus (Rat)).